A 71-amino-acid chain; its full sequence is Small ribosomal subunit protein bS21 (71 aa).

Residues 43–71 are disordered; the sequence is TERKRAKASAVKRHAKKLARENARRTRLY. The segment covering 46–59 has biased composition (basic residues); it reads KRAKASAVKRHAKK. The segment covering 60–71 has biased composition (basic and acidic residues); it reads LARENARRTRLY.

This sequence belongs to the bacterial ribosomal protein bS21 family.

The protein is Small ribosomal subunit protein bS21 of Pectobacterium atrosepticum (strain SCRI 1043 / ATCC BAA-672) (Erwinia carotovora subsp. atroseptica).